The chain runs to 247 residues: DNA repair protein RecO (247 aa).

Belongs to the RecO family.

Functionally, involved in DNA repair and RecF pathway recombination. The sequence is that of DNA repair protein RecO from Alkalilimnicola ehrlichii (strain ATCC BAA-1101 / DSM 17681 / MLHE-1).